We begin with the raw amino-acid sequence, 86 residues long: RNA-binding protein Hfq (86 aa).

Positions 9–68 (DPFLNALRRERIPVSIYLVNGIKLQGQIESFDQFVILLKNTVNQMVYKHAISTVVPARPV) constitute a Sm domain. Residues 65-86 (ARPVSHHSGERGSDRPSEKSED) form a disordered region. Over residues 71–86 (HSGERGSDRPSEKSED) the composition is skewed to basic and acidic residues.

Belongs to the Hfq family. In terms of assembly, homohexamer.

Its function is as follows. RNA chaperone that binds small regulatory RNA (sRNAs) and mRNAs to facilitate mRNA translational regulation in response to envelope stress, environmental stress and changes in metabolite concentrations. Also binds with high specificity to tRNAs. The polypeptide is RNA-binding protein Hfq (Vibrio vulnificus (strain YJ016)).